Here is a 666-residue protein sequence, read N- to C-terminus: DNA mismatch repair protein MutL (666 aa).

The protein belongs to the DNA mismatch repair MutL/HexB family.

In terms of biological role, this protein is involved in the repair of mismatches in DNA. It is required for dam-dependent methyl-directed DNA mismatch repair. May act as a 'molecular matchmaker', a protein that promotes the formation of a stable complex between two or more DNA-binding proteins in an ATP-dependent manner without itself being part of a final effector complex. The sequence is that of DNA mismatch repair protein MutL from Clostridium botulinum (strain 657 / Type Ba4).